A 1792-amino-acid chain; its full sequence is Eukaryotic translation initiation factor 4G (1792 aa).

Positions 1–12 (MSQRGDRGEGHA) are enriched in basic and acidic residues. Disordered stretches follow at residues 1-285 (MSQR…PRPP), 424-446 (DSSGQRGLPSVQQQSQPVSTYGS), 491-590 (SPSM…PTPV), 612-659 (NSVP…EDLK), 678-761 (GVNK…NESH), 874-912 (VASEDPLKPESMLKDQSSSAPAASARPVSREKPSVEITR), 960-993 (SSSIADHELPDESSEKEVNMGEDEGKKKVELDDW), 999-1018 (MSTPKLERSDSSNQTTEANG), 1275-1299 (GEREEAEADKTEEEGEIKQTKEERE), 1407-1503 (WQQR…HRTT), and 1537-1600 (ELSS…KLYS). A compositionally biased stretch (gly residues) spans 21–42 (FGGGHRGGGGVGGAGKGGGGSS). Over residues 88-107 (PLRPPAPQNAPAHVPVPAPR) the composition is skewed to pro residues. Polar residues-rich tracts occupy residues 147-156 (RISSTSTSQG) and 179-191 (STMQFPARTSSAP). Low complexity-rich tracts occupy residues 216–243 (PQAPKHQQQQQPLQQQKQQPQSQPPLQQ), 263–278 (PSQVKSSVHVSPSVPN), and 432–442 (PSVQQQSQPVS). Polar residues predominate over residues 491–517 (SPSMNTGPGSNKDNLAGSTTSGHSQVT). 3 stretches are compositionally biased toward basic and acidic residues: residues 545 to 564 (DVNKLKPAEDVVSHRQKDNE), 571 to 587 (KSGENESKASPITEKHP), and 633 to 643 (DSNKNATKDTR). Positions 644-654 (NLSQEPQSASS) are enriched in polar residues. Residues 699–718 (AADASSIDRSSARSTSESTE) are compositionally biased toward low complexity. Positions 964 to 990 (ADHELPDESSEKEVNMGEDEGKKKVEL) are enriched in basic and acidic residues. Residues 1018-1030 (GRKRYSRDFLLTL) form an EIF4E-binding region. Positions 1183–1406 (QRQLKAILNK…RDSIDLRKNK (224 aa)) constitute an MIF4G domain. The span at 1278-1289 (EEAEADKTEEEG) shows a compositional bias: acidic residues. Composition is skewed to basic and acidic residues over residues 1290 to 1299 (EIKQTKEERE) and 1411 to 1432 (RKVEGPKKIDEVHRDAAQERHA). Composition is skewed to low complexity over residues 1439–1450 (RGSVVGSGPRRG) and 1461–1470 (SAAALASPSS). Basic and acidic residues-rich tracts occupy residues 1490 to 1503 (IRFEERSPLDHRTT) and 1559 to 1572 (AREEPGSRIPDRSG). A compositionally biased stretch (polar residues) spans 1576-1593 (PNTQFAGPSNRPASQEGR). The region spanning 1603–1727 (DLREKSISAI…SLQEVGTLIE (125 aa)) is the MI domain.

This sequence belongs to the eukaryotic initiation factor 4G family. EIF4F is a multi-subunit complex, the composition of which varies with external and internal environmental conditions. It is composed of at least EIF4A, EIF4E and EIF4G. In higher plants two isoforms of EIF4F have been identified, named isoform EIF4F and isoform EIF(iso)4F. Isoform EIF4F has subunits p220 and p26, whereas isoform EIF(iso)4F has subunits p82 and p28.

Component of the protein complex eIF4F, which is involved in the recognition of the mRNA cap, ATP-dependent unwinding of 5'-terminal secondary structure and recruitment of mRNA to the ribosome. The chain is Eukaryotic translation initiation factor 4G from Oryza sativa subsp. japonica (Rice).